Here is a 517-residue protein sequence, read N- to C-terminus: DNA-binding protein Ikaros (517 aa).

Residues 1–71 (MDVDEGQDMS…QSDEENGRAC (71 aa)) are disordered. Ser13 bears the Phosphoserine mark. The residue at position 23 (Thr23) is a Phosphothreonine. A compositionally biased stretch (polar residues) spans 37 to 47 (LSTTSGAQQNS). Residue Lys58 forms a Glycyl lysine isopeptide (Lys-Gly) (interchain with G-Cter in SUMO) linkage. Ser63 and Ser101 each carry phosphoserine. The C2H2-type 1 zinc finger occupies 117–139 (LKCDICGIVCIGPNVLMVHKRSH). The residue at position 140 (Thr140) is a Phosphothreonine. Residues 144 to 166 (FQCNQCGASFTQKGNLLRHIKLH) form a C2H2-type 2 zinc finger. The segment at 153–162 (FTQKGNLLRH) is required for both high-affinity DNA binding and pericentromeric heterochromatin localization. Position 167 is a phosphoserine (Ser167). The C2H2-type 3 zinc-finger motif lies at 172-194 (FKCHLCNYACRRRDALTGHLRTH). The segment at 179–194 (YACRRRDALTGHLRTH) is required for both high-affinity DNA binding and pericentromeric heterochromatin localization. Ser195 carries the post-translational modification Phosphoserine. The C2H2-type 4 zinc-finger motif lies at 200 to 223 (HKCGYCGRSYKQRSSLEEHKERCH). Residue Lys239 forms a Glycyl lysine isopeptide (Lys-Gly) (interchain with G-Cter in SUMO) linkage. Phosphoserine occurs at positions 259, 287, 293, 357, 360, 384, 386, 388, and 392. The tract at residues 376-400 (SVSSEREASPSNSCQDSTDTESNAE) is disordered. Thr393 carries the post-translational modification Phosphothreonine. Ser397 and Ser440 each carry phosphoserine. 2 consecutive C2H2-type zinc fingers follow at residues 457 to 479 (YKCE…MGCH) and 488 to 512 (FECN…RGEH). Residues 463-466 (RVLF) are required for binding PP1CC.

The protein belongs to the Ikaros C2H2-type zinc-finger protein family. In terms of assembly, heterodimer with other IKAROS family members. Interacts with IKZF4 and IKZF5. Component of the chromatin-remodeling NuRD repressor complex which includes at least HDAC1, HDAC2, RBBP4, RBBP7, IKZF1, MTA2, MBD2, MBD3, MTA1L1, CHD3 and CHD4. Interacts directly with the CHD4 component of the NuRD complex. Interacts directly with SMARCA4; the interaction associates IKFZ1 with the BAF complex. Interacts with SUMO1; the interaction sumoylates IKAROS, promoted by PIAS2 and PIAS3. Interacts with PIAS2 (isoform alpha); the interaction promotes sumoylation and reduces transcription repression. Interacts, to a lesser extent, with PIAS3. Interacts with PPP1CC; the interaction targets PPP1CC to pericentromeric heterochromatin, dephosphorylates IKAROS, stabilizes it and prevents it from degradation. Interacts with IKZF3. Phosphorylation at Ser-357 and Ser-360 downstream of SYK induces nuclear translocation. Phosphorylation controls cell-cycle progression from late G(1) stage to S stage. Hyperphosphorylated during G2/M phase. Dephosphorylated state during late G(1) phase. Phosphorylation on Thr-140 is required for DNA and pericentromeric location during mitosis. CK2 is the main kinase, in vitro. GSK3 and CDK may also contribute to phosphorylation of the C-terminal serine and threonine residues. Phosphorylation on these C-terminal residues reduces the DNA-binding ability. Phosphorylation/dephosphorylation events on Ser-13 and Ser-293 regulate TDT expression during thymocyte differentiation. Dephosphorylation by protein phosphatase 1 regulates stability and pericentromeric heterochromatin location. Phosphorylated in both lymphoid and non-lymphoid tissues. Post-translationally, sumoylated. Simultaneous sumoylation on the 2 sites results in a loss of both HDAC-dependent and HDAC-independent repression. Has no effect on pericentromeric heterochromatin location. Desumoylated by SENP1. In terms of processing, polyubiquitinated. As to expression, strongly expressed in T-cells and their progenitors,in B-cells, and in all early embryonic retinal progenitor cells (RPCs). Isoforms V and VI are the predominant isoforms in lymphocytes.

Its subcellular location is the nucleus. The protein localises to the cytoplasm. Its function is as follows. Transcription regulator of hematopoietic cell differentiation. Binds gamma-satellite DNA. Binds with higher affinity to gamma satellite A. Plays a role in the development of lymphocytes, B- and T-cells. Binds and activates the enhancer (delta-A element) of the CD3-delta gene. Repressor of the TDT (terminal deoxynucleotidyltransferase) gene during thymocyte differentiation. Regulates transcription through association with both HDAC-dependent and HDAC-independent complexes. Targets the 2 chromatin-remodeling complexes, NuRD and BAF (SWI/SNF), in a single complex (PYR complex), to the beta-globin locus in adult erythrocytes. Increases normal apoptosis in adult erythroid cells. Confers early temporal competence to retinal progenitor cells (RPCs). Function is isoform-specific and is modulated by dominant-negative inactive isoforms. The chain is DNA-binding protein Ikaros (Ikzf1) from Mus musculus (Mouse).